The chain runs to 516 residues: Oxysterol-binding protein-like protein 1 (516 aa).

Disordered regions lie at residues 168-240 (PLGK…SQKS) and 459-501 (KQEI…EEGK). Residues 178–187 (SRTTSSQSVA) are compositionally biased toward polar residues. Ser182 is subject to Phosphoserine. Residues 197–206 (TSKKKSSKKN) show a composition bias toward basic residues. The span at 218–238 (DRSSTAPSTAESNNEHLSSSQ) shows a compositional bias: polar residues.

Belongs to the OSBP family.

The protein localises to the endoplasmic reticulum. The polypeptide is Oxysterol-binding protein-like protein 1 (obp1) (Schizosaccharomyces pombe (strain 972 / ATCC 24843) (Fission yeast)).